The chain runs to 179 residues: RNA polymerase sigma-E factor (179 aa).

A Polymerase core binding motif is present at residues 36–49 (DLLQTALVRTYGRW). A DNA-binding region (H-T-H motif) is located at residues 130-149 (TEETAAALGMSAGTVKSTLH).

Belongs to the sigma-70 factor family. ECF subfamily.

Its subcellular location is the cytoplasm. In terms of biological role, sigma factors are initiation factors that promote the attachment of RNA polymerase to specific initiation sites and are then released. This sigma factor is required for normal cell wall integrity; it is recruited by RNA polymerase to transcribe genes with cell wall-related functions. The protein is RNA polymerase sigma-E factor (sigE) of Streptomyces avermitilis (strain ATCC 31267 / DSM 46492 / JCM 5070 / NBRC 14893 / NCIMB 12804 / NRRL 8165 / MA-4680).